Consider the following 176-residue polypeptide: MSTGSISDVDEFHESELLDGLPKFGSGKDPGTSNESTEDSSNCEGASVSECTGKRRKSANMRRSAPNGVAQEGKQVQRNAANARERARMRVLSKAFSRLKTTLPWVPPDTKLSKLDTLRLASSYIAHLRQILANDKYENGYIHPVNLTWPFMVAGKPENELKEMLNSTRLCGTTAS.

The segment at 1–84 (MSTGSISDVD…QVQRNAANAR (84 aa)) is disordered. Polar residues predominate over residues 31 to 44 (GTSNESTEDSSNCE). A bHLH domain is found at 76–128 (VQRNAANARERARMRVLSKAFSRLKTTLPWVPPDTKLSKLDTLRLASSYIAHL).

As to quaternary structure, efficient DNA binding requires dimerization with another bHLH protein. As to expression, expressed in the cranial paraxial mesoderm from 20 hpf and subsequently becomes restricted to the pharyngeal mesoderm that will form the muscle. Expression in the proepicardial organ is first seen at 40hpf in a cluster of cells between the myocardium and yolk. Also expressed in the developing arches. Expression begins to surround the heart by day 3 of development, and by 96 hpf, expression is restricted to the outer epicardial layer surrounding the myocardium.

Its subcellular location is the nucleus. Involved in epithelial-mesenchymal interactions in kidney and lung morphogenesis that include epithelial differentiation and branching morphogenesis. In Danio rerio (Zebrafish), this protein is Transcription factor 21.